A 182-amino-acid chain; its full sequence is UPF0690 protein C1orf52 homolog (182 aa).

The segment at 1–61 (MAAEEKDPLS…AEKRLPGPDE (61 aa)) is disordered. Residues 23–32 (SDEEDNSEPE) are compositionally biased toward acidic residues. Over residues 51–61 (KAEKRLPGPDE) the composition is skewed to basic and acidic residues. The residue at position 67 (threonine 67) is a Phosphothreonine. A Phosphotyrosine modification is found at tyrosine 132. The disordered stretch occupies residues 132 to 182 (YEDNGDDAPQNAKKARLLPEGEETVESDDEKDEHTSKKRKIELGEPTKKKK). Residues 151 to 162 (EGEETVESDDEK) are compositionally biased toward acidic residues. Serine 158 carries the post-translational modification Phosphoserine. Residues 172-182 (IELGEPTKKKK) show a composition bias toward basic and acidic residues.

The protein belongs to the UPF0690 family.

The sequence is that of UPF0690 protein C1orf52 homolog from Bos taurus (Bovine).